Reading from the N-terminus, the 608-residue chain is Probable Ufm1-specific protease 2 (608 aa).

Catalysis depends on residues cysteine 441, aspartate 565, and histidine 567.

Belongs to the peptidase C78 family.

Its function is as follows. Thiol protease which recognizes and hydrolyzes the peptide bond at the C-terminal Gly of UFM1, a ubiquitin-like modifier protein bound to a number of target proteins. Does not hydrolyze SUMO1 or ISG15 ubiquitin-like proteins. In Drosophila pseudoobscura pseudoobscura (Fruit fly), this protein is Probable Ufm1-specific protease 2.